The following is a 320-amino-acid chain: PUP1 protein homolog (320 aa).

2 helical membrane passes run 66-85 and 100-119; these read MWGGWLGFSAVFLTPFAYRY and FVLGVMALFFATNFAGRSMY. Residues 205–320 are disordered; that stretch reads GGVFNGSPFM…QSGRYGGNRS (116 aa). Phosphoserine is present on Ser230. Residues 253–266 show a composition bias toward polar residues; that stretch reads GDNSSSSSWENIRN. Positions 267–284 are enriched in basic and acidic residues; it reads TSRDQSQESDASVDHESD.

It belongs to the PUP1 family.

The protein resides in the mitochondrion membrane. This Saccharomyces cerevisiae (strain ATCC 204508 / S288c) (Baker's yeast) protein is PUP1 protein homolog.